Consider the following 235-residue polypeptide: UPF0758 protein A1S_2918 (235 aa).

The interval Met-1–Gln-20 is disordered. A compositionally biased stretch (basic and acidic residues) spans Pro-9–Leu-18. Positions Ser-105–Leu-227 constitute an MPN domain. Positions 176, 178, and 189 each coordinate Zn(2+). The JAMM motif motif lies at His-176–Asp-189.

Belongs to the UPF0758 family.

The protein is UPF0758 protein A1S_2918 of Acinetobacter baumannii (strain ATCC 17978 / DSM 105126 / CIP 53.77 / LMG 1025 / NCDC KC755 / 5377).